Consider the following 570-residue polypeptide: Sulfite reductase [NADPH] hemoprotein beta-component (570 aa).

4 residues coordinate [4Fe-4S] cluster: cysteine 434, cysteine 440, cysteine 479, and cysteine 483. Residue cysteine 483 coordinates siroheme.

This sequence belongs to the nitrite and sulfite reductase 4Fe-4S domain family. As to quaternary structure, alpha(8)-beta(8). The alpha component is a flavoprotein, the beta component is a hemoprotein. The cofactor is siroheme. [4Fe-4S] cluster is required as a cofactor.

The enzyme catalyses hydrogen sulfide + 3 NADP(+) + 3 H2O = sulfite + 3 NADPH + 4 H(+). The protein operates within sulfur metabolism; hydrogen sulfide biosynthesis; hydrogen sulfide from sulfite (NADPH route): step 1/1. Functionally, component of the sulfite reductase complex that catalyzes the 6-electron reduction of sulfite to sulfide. This is one of several activities required for the biosynthesis of L-cysteine from sulfate. The polypeptide is Sulfite reductase [NADPH] hemoprotein beta-component (Shigella boydii serotype 4 (strain Sb227)).